We begin with the raw amino-acid sequence, 161 residues long: ATP synthase subunit b' (161 aa).

Residues 26–45 (LPLMAIQFLLLAFVLDKIFY) traverse the membrane as a helical segment.

This sequence belongs to the ATPase B chain family. In terms of assembly, F-type ATPases have 2 components, F(1) - the catalytic core - and F(0) - the membrane proton channel. F(1) has five subunits: alpha(3), beta(3), gamma(1), delta(1), epsilon(1). F(0) has four main subunits: a(1), b(1), b'(1) and c(10-14). The alpha and beta chains form an alternating ring which encloses part of the gamma chain. F(1) is attached to F(0) by a central stalk formed by the gamma and epsilon chains, while a peripheral stalk is formed by the delta, b and b' chains.

It localises to the cellular thylakoid membrane. Functionally, f(1)F(0) ATP synthase produces ATP from ADP in the presence of a proton or sodium gradient. F-type ATPases consist of two structural domains, F(1) containing the extramembraneous catalytic core and F(0) containing the membrane proton channel, linked together by a central stalk and a peripheral stalk. During catalysis, ATP synthesis in the catalytic domain of F(1) is coupled via a rotary mechanism of the central stalk subunits to proton translocation. Component of the F(0) channel, it forms part of the peripheral stalk, linking F(1) to F(0). The b'-subunit is a diverged and duplicated form of b found in plants and photosynthetic bacteria. The chain is ATP synthase subunit b' from Trichodesmium erythraeum (strain IMS101).